Reading from the N-terminus, the 32-residue chain is Yop proteins translocation protein A (32 aa).

This is Yop proteins translocation protein A (yscA) from Yersinia pestis.